Here is a 242-residue protein sequence, read N- to C-terminus: ATP synthase subunit a (242 aa).

6 helical membrane passes run 29–49 (SSIY…LAFY), 84–104 (FIPL…LGMT), 114–134 (IIVT…VGFV), 140–160 (FLTL…MIVI), 181–201 (MAGH…MIYL), and 203–223 (FLPI…AILQ).

Belongs to the ATPase A chain family. In terms of assembly, F-type ATPases have 2 components, CF(1) - the catalytic core - and CF(0) - the membrane proton channel. CF(1) has five subunits: alpha(3), beta(3), gamma(1), delta(1), epsilon(1). CF(0) has three main subunits: a(1), b(2) and c(9-12). The alpha and beta chains form an alternating ring which encloses part of the gamma chain. CF(1) is attached to CF(0) by a central stalk formed by the gamma and epsilon chains, while a peripheral stalk is formed by the delta and b chains.

Its subcellular location is the cell membrane. Functionally, key component of the proton channel; it plays a direct role in the translocation of protons across the membrane. The protein is ATP synthase subunit a of Rickettsia africae (strain ESF-5).